The chain runs to 40 residues: Beta/delta-ctenitoxin-Pr1a (40 aa).

Disulfide bonds link Cys-1–Cys-15, Cys-8–Cys-21, Cys-14–Cys-31, and Cys-23–Cys-29.

The protein belongs to the neurotoxin 03 (Tx2) family. 05 subfamily. Expressed by the venom gland.

Its subcellular location is the secreted. In terms of biological role, potent insecticidal toxin that binds to two distinct sites in insect sodium channels, with close affinity (Kd1=34.7 pM and Kd2=35.1 pM). Its association is rather fast (1.4 and 8.5 minutes, respectively for sites 1 and 2) and its dissociation is a slower process (5.4 and 32.8 minutes, respectively). On rat brain synaptosomes the toxin partially competes (~30%) with the beta-toxin CssIV, but does not compete with the alpha-toxin AaII, nor with the beta-toxin Ts VII. On cockroach nerve cord synaptosomes, the toxin does not compete with the anti-insect toxin LqqIT1, but it competes with the 'alpha-like' toxin BomIV (IC(50)=80 pM). In cockroach neurons, the toxin inhibits the inactivation of sodium channels and it shifts the sodium channel activation to hyperpolarizing potentials. Hence, it behaves like an 'alpha-like' toxin and binds preferentially to site 3 on the insect Nav channel, located on the domain IV. The toxin may also inhibit the N-methyl-D-aspartate (NMDA)-subtype of ionotropic glutamate receptor (GRIN). In vivo, the toxin causes excitatory effects on insects. The protein is Beta/delta-ctenitoxin-Pr1a of Phoneutria reidyi (Brazilian Amazonian armed spider).